We begin with the raw amino-acid sequence, 404 residues long: S-adenosylmethionine synthase (404 aa).

Histidine 17 serves as a coordination point for ATP. Aspartate 19 serves as a coordination point for Mg(2+). Glutamate 45 is a binding site for K(+). L-methionine contacts are provided by glutamate 58 and glutamine 101. A flexible loop region spans residues glutamine 101–arginine 111. ATP-binding positions include aspartate 172–lysine 174, arginine 245–phenylalanine 246, aspartate 254, arginine 260–lysine 261, alanine 277, and lysine 281. Aspartate 254 provides a ligand contact to L-methionine. Lysine 285 is an L-methionine binding site.

It belongs to the AdoMet synthase family. In terms of assembly, homotetramer; dimer of dimers. Mg(2+) is required as a cofactor. It depends on K(+) as a cofactor.

It localises to the cytoplasm. It carries out the reaction L-methionine + ATP + H2O = S-adenosyl-L-methionine + phosphate + diphosphate. It participates in amino-acid biosynthesis; S-adenosyl-L-methionine biosynthesis; S-adenosyl-L-methionine from L-methionine: step 1/1. Functionally, catalyzes the formation of S-adenosylmethionine (AdoMet) from methionine and ATP. The overall synthetic reaction is composed of two sequential steps, AdoMet formation and the subsequent tripolyphosphate hydrolysis which occurs prior to release of AdoMet from the enzyme. The sequence is that of S-adenosylmethionine synthase from Chlorobium luteolum (strain DSM 273 / BCRC 81028 / 2530) (Pelodictyon luteolum).